A 152-amino-acid polypeptide reads, in one-letter code: Biotin carboxyl carrier protein of acetyl-CoA carboxylase (152 aa).

The Biotinyl-binding domain maps to 72 to 148; the sequence is IIDILSPISG…TKNQVLMKII (77 aa). An N6-biotinyllysine modification is found at K114.

The protein resides in the plastid. It localises to the chloroplast. It participates in lipid metabolism; fatty acid biosynthesis. This protein is a component of the acetyl coenzyme A carboxylase complex; first, biotin carboxylase catalyzes the carboxylation of the carrier protein and then the transcarboxylase transfers the carboxyl group to form malonyl-CoA. This Cyanidium caldarium (Red alga) protein is Biotin carboxyl carrier protein of acetyl-CoA carboxylase (accB).